The sequence spans 348 residues: Protein lifeguard 1 (348 aa).

The segment at 1-118 is disordered; the sequence is MSHEKSFLVS…GNYQEEGPPS (118 aa). The segment covering 14–41 has biased composition (pro residues); sequence YPPPNPGYPVGPQAPMPPYVQPPYPGAP. The segment covering 42–57 has biased composition (low complexity); sequence YPQAAFQPSPYGQPGY. A compositionally biased stretch (pro residues) spans 82 to 101; it reads GPYPQSPFPPNPYGQPPPFQ. Transmembrane regions (helical) follow at residues 142 to 162, 174 to 194, 205 to 225, 230 to 250, 260 to 280, 284 to 304, and 323 to 343; these read VFLVLTLQLSVTLSTVAIFTF, VWTYYVSYAIFFISLIVLSCC, LVALSILTISLSYMVGMIASF, AVIMAVGITTAVCFTVVIFSM, MGVLLVSVVVLFIFAILCIFI, ILEIVYASLGALLFTCFLAVD, and FAALNLYTDIINIFLYILTII.

The protein belongs to the BI1 family. LFG subfamily.

Its subcellular location is the membrane. Its function is as follows. Potential apoptotic regulator. The polypeptide is Protein lifeguard 1 (Grina) (Rattus norvegicus (Rat)).